Here is a 249-residue protein sequence, read N- to C-terminus: O-methyltransferase adaD (249 aa).

The segment covering 1 to 15 (MSSVTLTTTTTTTST) has biased composition (low complexity). A disordered region spans residues 1-26 (MSSVTLTTTTTTTSTPPKPTPKDEPQ).

It belongs to the methyltransferase superfamily.

The enzyme catalyses 2-acetyl-3,4a,8,10,11,12a-hexahydroxy-1,4,4a,5,12,12a-hexahydrotetracene-1,12-dione + S-adenosyl-L-methionine = TAN-1612 + S-adenosyl-L-homocysteine + H(+). The protein operates within secondary metabolite biosynthesis. O-methyltransferase; part of the gene cluster that mediates the biosynthesis of the linear tetracyclic TAN-1612 neuropeptide Y receptor antagonist. The decaketide backbone of TAN-1612 is synthesized by the non-reducing polyketide synthase adaA via condensation of one acetyl-CoA starter unit with 9 malonyl-CoA units. The FAD-dependent monooxygenase adaC then performs hydroxylation at C2 while the polaketide chain is still attached to the NRPKS adaA. The alpha-hydroxylation step at C2 appears to be crucial for the following C18-C1 Claisen cyclization and release of the C9-hydroxyl version of TAN-1612 from the NRPKS adaA, two steps performed by the lactamase-like protein adaB. Finally, the O-methyltransferase adaD performs the C9 O-methylation to complete the biosynthesis of TAN-1612. In Aspergillus niger, this protein is O-methyltransferase adaD.